The sequence spans 384 residues: MVFYHRQGELPKKRHTVFMKDGKLMREEVFGLNGFNGRYSLLYHLNPPTRIMKLGEWKSNTIGEWKDAEYRHHKLSTSKLRKSSDVFLDRIALIFNDNLIISFSKVDEGDTKLFYRNADFDEIYYVHSGEILFKSVFGEIEVKEGDYLVIPRGTTYTLSFKKNAELFIIEGKQIEVPKDYRNEYGQLVEGSFYYNRDLKLPVLRTYDENGNYKLVIKTVNGFQLVELDTHPFDVVGWDGYLYPFALSVYDLEPITGKLHQPPTAYTTFAADDFVVCTFVPRLFDYHPQSVPISYYHNNIDAEEIIFYSSGQFMSRRGINKGDITLHRGGHIHGPQPSAVEASLNKRGTYNDEVAIMVETQKRVKVSIYAKEIDDPTYPLSWYTS.

3 residues coordinate Fe cation: His-296, Glu-302, and His-332.

Belongs to the homogentisate dioxygenase family. Requires Fe cation as cofactor.

This is Putative dioxygenase SSO1533 from Saccharolobus solfataricus (strain ATCC 35092 / DSM 1617 / JCM 11322 / P2) (Sulfolobus solfataricus).